Reading from the N-terminus, the 326-residue chain is Nine-heme cytochrome c (326 aa).

The signal sequence occupies residues 1–30; sequence MRNGTSLLLLAAIALAGAACLTAMGGTAKA. Residues His67, His70, Cys77, Cys80, His81, His82, Cys89, Cys92, His93, His111, Cys127, Cys130, His131, Cys141, Cys144, His145, Cys157, Cys160, His161, His227, His230, His248, Cys255, Cys258, His259, His260, Cys271, Cys274, His275, His294, Cys297, Cys300, His301, Cys314, Cys317, and His318 each contribute to the heme site.

As to quaternary structure, monomer. Post-translationally, binds 9 heme groups per subunit.

The protein resides in the periplasm. May form part of a transmembrane redox complex through which electrons are transferred to the cytoplasm for reduction of sulfate. This chain is Nine-heme cytochrome c, found in Desulfovibrio desulfuricans (strain ATCC 27774 / DSM 6949 / MB).